We begin with the raw amino-acid sequence, 357 residues long: Phenylalanine--tRNA ligase alpha subunit (357 aa).

Glu278 contributes to the Mg(2+) binding site.

This sequence belongs to the class-II aminoacyl-tRNA synthetase family. Phe-tRNA synthetase alpha subunit type 1 subfamily. Tetramer of two alpha and two beta subunits. It depends on Mg(2+) as a cofactor.

Its subcellular location is the cytoplasm. The enzyme catalyses tRNA(Phe) + L-phenylalanine + ATP = L-phenylalanyl-tRNA(Phe) + AMP + diphosphate + H(+). The chain is Phenylalanine--tRNA ligase alpha subunit from Albidiferax ferrireducens (strain ATCC BAA-621 / DSM 15236 / T118) (Rhodoferax ferrireducens).